A 110-amino-acid polypeptide reads, in one-letter code: Small ribosomal subunit protein eS25 (110 aa).

The disordered stretch occupies residues 1–38 (MGGKKKPTLSQLAKKAEKEKAQQAQKAKKEVKKEETPA). Basic and acidic residues predominate over residues 14 to 38 (KKAEKEKAQQAQKAKKEVKKEETPA).

Belongs to the eukaryotic ribosomal protein eS25 family.

This chain is Small ribosomal subunit protein eS25 (rps25e), found in Pyrobaculum aerophilum (strain ATCC 51768 / DSM 7523 / JCM 9630 / CIP 104966 / NBRC 100827 / IM2).